The following is a 379-amino-acid chain: PqqA peptide cyclase (379 aa).

The Radical SAM core domain maps to 8–220; that stretch reads LPAPIGLLAE…IRVVEEARER (213 aa). The [4Fe-4S] cluster site is built by Cys-22, Cys-26, and Cys-29.

This sequence belongs to the radical SAM superfamily. PqqE family. Interacts with PqqD. The interaction is necessary for activity of PqqE. The cofactor is [4Fe-4S] cluster.

It catalyses the reaction [PQQ precursor protein] + S-adenosyl-L-methionine = E-Y cross-linked-[PQQ precursor protein] + 5'-deoxyadenosine + L-methionine + H(+). The protein operates within cofactor biosynthesis; pyrroloquinoline quinone biosynthesis. In terms of biological role, catalyzes the cross-linking of a glutamate residue and a tyrosine residue in the PqqA protein as part of the biosynthesis of pyrroloquinoline quinone (PQQ). This Methylobacterium nodulans (strain LMG 21967 / CNCM I-2342 / ORS 2060) protein is PqqA peptide cyclase.